The following is a 322-amino-acid chain: Putative pyruvyl transferase EpsO (322 aa).

It belongs to the polysaccharide pyruvyl transferase family.

May be involved in the production of the exopolysaccharide (EPS) component of the extracellular matrix during biofilm formation. EPS is responsible for the adhesion of chains of cells into bundles. In Bacillus subtilis (strain 168), this protein is Putative pyruvyl transferase EpsO (epsO).